A 30-amino-acid polypeptide reads, in one-letter code: Photosystem II reaction center protein Psb30 (30 aa).

The Lumenal segment spans residues 1 to 6 (EVIAQL). A helical transmembrane segment spans residues 7 to 21 (TMIAMIGIAGPMIIF). Over 22–30 (LLAVRRGNL) the chain is Cytoplasmic.

It belongs to the Psb30/Ycf12 family. In terms of assembly, PSII is composed of 1 copy each of membrane proteins PsbA, PsbB, PsbC, PsbD, PsbE, PsbF, PsbH, PsbI, PsbJ, PsbK, PsbL, PsbM, PsbT, PsbX, PsbY, PsbZ, Psb30/Ycf12, peripheral proteins PsbO, CyanoQ (PsbQ), PsbU, PsbV and a large number of cofactors. It forms dimeric complexes. The cofactor is PSII binds multiple chlorophylls, carotenoids and specific lipids..

It localises to the cellular thylakoid membrane. Functionally, a core subunit of photosystem II (PSII), probably helps stabilize the reaction center. PSII is a light-driven water plastoquinone oxidoreductase, using light energy to abstract electrons from H(2)O, generating a proton gradient subsequently used for ATP formation. The polypeptide is Photosystem II reaction center protein Psb30 (Thermostichus vulcanus (Synechococcus vulcanus)).